Here is a 1167-residue protein sequence, read N- to C-terminus: C5a peptidase (1167 aa).

The N-terminal stretch at 1-31 (MRKKQKLPFDKLAIALMSTSILLNAQSDIKA) is a signal peptide. Residues 34–52 (VTEDTPVTEQAVETPQPTA) are compositionally biased toward polar residues. A disordered region spans residues 34–73 (VTEDTPVTEQAVETPQPTAVSEEVPSSKETKTPQTPDDAE). In terms of domain architecture, Peptidase S8 spans 99 to 581 (KATIRDLNDP…AGAVDAKKAS (483 aa)). Residues Asp130, His193, and Ser512 each act as charge relay system in the active site. The tract at residues 1029-1133 (EGHSNKPEQD…RDQLPTTNDK (105 aa)) is disordered. Repeat copies occupy residues 1034–1050 (KPEQDGSGQTPDKKPEA), 1051–1067 (KPEQDGSDQAPDKKPEA), 1068–1084 (KPEQDGSGQTPDKKPET), and 1085–1101 (KPEKDSSGQTPGKTPQK). The 4 X 17 AA tandem repeats stretch occupies residues 1034-1101 (KPEQDGSGQT…GQTPGKTPQK (68 aa)). Composition is skewed to basic and acidic residues over residues 1044-1071 (PDKKPEAKPEQDGSDQAPDKKPEAKPEQ) and 1078-1090 (PDKKPETKPEKDS). Polar residues-rich tracts occupy residues 1092–1106 (GQTPGKTPQKGQPSR) and 1120–1130 (KASTRDQLPTT). An LPXTG sorting signal motif is present at residues 1127–1131 (LPTTN). At Thr1130 the chain carries Pentaglycyl murein peptidoglycan amidated threonine. The propeptide at 1131–1167 (NDKDTNRLHLLKLVMTTFFFGLVAHIFKTKRQKETKK) is removed by sortase.

This sequence belongs to the peptidase S8 family. Cleaved by SpeB protease; leading to its degradation. Degradation by SpeB is probably strictly regulated to preserve integrity of C5a peptidase.

It localises to the secreted. It is found in the cell wall. The catalysed reaction is The primary cleavage site is at 67-His-|-Lys-68 in human C5a with a minor secondary cleavage site at 58-Ala-|-Ser-59.. Functionally, this virulence factor of S.pyogenes specifically cleaves the human serum chemotaxin C5a at '68-Lys-|-Asp-69' bond near its C-terminus, destroying its ability to serve as a chemoattractant. This chain is C5a peptidase (scpA), found in Streptococcus pyogenes.